The chain runs to 373 residues: Chorismate synthase (373 aa).

R46 provides a ligand contact to NADP(+). FMN contacts are provided by residues 123–125 (RSS), 251–252 (NA), G295, 310–314 (KPTPS), and R337.

Belongs to the chorismate synthase family. FMNH2 is required as a cofactor.

It catalyses the reaction 5-O-(1-carboxyvinyl)-3-phosphoshikimate = chorismate + phosphate. It functions in the pathway metabolic intermediate biosynthesis; chorismate biosynthesis; chorismate from D-erythrose 4-phosphate and phosphoenolpyruvate: step 7/7. Functionally, catalyzes the anti-1,4-elimination of the C-3 phosphate and the C-6 proR hydrogen from 5-enolpyruvylshikimate-3-phosphate (EPSP) to yield chorismate, which is the branch point compound that serves as the starting substrate for the three terminal pathways of aromatic amino acid biosynthesis. This reaction introduces a second double bond into the aromatic ring system. In Methanococcus maripaludis (strain C5 / ATCC BAA-1333), this protein is Chorismate synthase.